Reading from the N-terminus, the 398-residue chain is MAKLTVKDVELKGKKVLVRVDFNVPIKDGVITNDNRITAALPTIKYILEQGGRAVLFSHLGRVKEESDKAGKSLAPVAKALSEKLGQDVVFPGATRGAELEAAINELKDGEILLVENTRFEDIDGKKESKNDPELGKYWASLGDGIFVNDAFGTAHRAHASNVGISANVEKAVAGFLLENEIAYIQEAVEAPERPFVAILGGSKVSDKIGVIENLLSKADKVIIGGGMAYTFLKAQGYEIGTSLVEDDKLDLAKELLEKAAGKLILPLDHKVANAFAGYTEVKETADQNIPAGFMGLDVANKTIADYNTQLEGAKTVVWNGPVGVFENPDFQAGTVGLMEAIVKQPGVKSIIGGGDSAAAAINLGYAEKFSWISTGGGASMELLEGKVLPGLAALTEK.

Substrate-binding positions include 21–23 (DFN), Arg-36, 59–62 (HLGR), Arg-119, and Arg-157. Residues Lys-208, Gly-296, Glu-327, and 354-357 (GGDS) contribute to the ATP site.

This sequence belongs to the phosphoglycerate kinase family. As to quaternary structure, monomer.

The protein resides in the cytoplasm. It carries out the reaction (2R)-3-phosphoglycerate + ATP = (2R)-3-phospho-glyceroyl phosphate + ADP. The protein operates within carbohydrate degradation; glycolysis; pyruvate from D-glyceraldehyde 3-phosphate: step 2/5. The polypeptide is Phosphoglycerate kinase (Lactococcus lactis subsp. cremoris (strain MG1363)).